The primary structure comprises 653 residues: Protein SCARECROW (653 aa).

Disordered stretches follow at residues 1-69 (MAES…RRVS) and 193-265 (PSSS…AVQT). Residues 17–31 (PLRTTSSGSSSSNNR) show a composition bias toward low complexity. The segment covering 32–41 (GPPPPPPPPL) has biased composition (pro residues). The segment covering 51–63 (EMSSNPDYNNSSR) has biased composition (polar residues). The span at 209–230 (QISNNPSPPQQQQQHQQQQQQH) shows a compositional bias: low complexity. Residues 246–265 (STDAPPQPETVTATVPAVQT) are compositionally biased toward polar residues. The region spanning 281–650 (QKQDEEGLHL…LSLLTASAWT (370 aa)) is the GRAS domain. Positions 288–351 (LHLLTLLLQC…LLNSCLGIYA (64 aa)) are leucine repeat I (LRI). Positions 295–299 (LQCAE) match the LxCxE motif motif. The VHIID stretch occupies residues 370 to 435 (FQVFNGISPL…GGPPHVRLTG (66 aa)). The VHIID signature appears at 401 to 405 (VHIID). The leucine repeat II (LRII) stretch occupies residues 445–477 (ATGKRLSDFADKLGLPFEFCPLAEKVGNLDTER). The segment at 486–573 (VAVHWLQHSL…QQLLSKEIRN (88 aa)) is PFYRE. An SAW region spans residues 576–650 (AVGGPSRSGE…LSLLTASAWT (75 aa)).

It belongs to the GRAS family. As to quaternary structure, interacts with SHR, JKD and MGP. Interacts with SIEL. Interacts with RBR1 through its the LxCxE motif. In terms of tissue distribution, expressed in siliques, leaves and roots. Detected in the initial daughter cell before its asymmetric division and remains expressed only in the endodermal cell layer after the division. Expressed in the endodermis or starch sheath of the seedling hypocotyl, in the leaf bundle sheath cells and the root quiescent center.

Its subcellular location is the nucleus. In terms of biological role, transcription factor required for quiescent center cells specification and maintenance of surrounding stem cells, and for the asymmetric cell division involved in radial pattern formation in roots. Essential for cell division but not differentiation of the ground tissue. Also required for normal shoot gravitropism. Regulates the radial organization of the shoot axial organs. Binds to the promoter of MGP, NUC, RLK and SCL3. Restricts SHR movment and sequesters it into the nucleus of the endodermis. This is Protein SCARECROW from Arabidopsis thaliana (Mouse-ear cress).